Here is a 765-residue protein sequence, read N- to C-terminus: AMP deaminase 3 (765 aa).

2 positions are modified to phosphoserine: S85 and S106. Zn(2+) contacts are provided by H315 and H317. Substrate is bound by residues H317 and 386–391 (KFNSKY). H584 contributes to the Zn(2+) binding site. E587 is a binding site for substrate. The active-site Proton acceptor is H606. Position 661 (D661) interacts with Zn(2+). 662–665 (DPMQ) contributes to the substrate binding site.

The protein belongs to the metallo-dependent hydrolases superfamily. Adenosine and AMP deaminases family. As to quaternary structure, homotetramer. Requires Zn(2+) as cofactor. In terms of tissue distribution, expressed in adult tissues such as aorta, heart, kidney, lung, muscle and thyroid. Weakly expressed in thyroid and not detected in liver.

It catalyses the reaction AMP + H2O + H(+) = IMP + NH4(+). The protein operates within purine metabolism; IMP biosynthesis via salvage pathway; IMP from AMP: step 1/1. In terms of biological role, AMP deaminase plays a critical role in energy metabolism. This Rattus norvegicus (Rat) protein is AMP deaminase 3.